The sequence spans 393 residues: NAD(P)H-quinone oxidoreductase subunit H, chloroplastic (393 aa).

It belongs to the complex I 49 kDa subunit family. NDH is composed of at least 16 different subunits, 5 of which are encoded in the nucleus.

The protein resides in the plastid. It localises to the chloroplast thylakoid membrane. The enzyme catalyses a plastoquinone + NADH + (n+1) H(+)(in) = a plastoquinol + NAD(+) + n H(+)(out). The catalysed reaction is a plastoquinone + NADPH + (n+1) H(+)(in) = a plastoquinol + NADP(+) + n H(+)(out). NDH shuttles electrons from NAD(P)H:plastoquinone, via FMN and iron-sulfur (Fe-S) centers, to quinones in the photosynthetic chain and possibly in a chloroplast respiratory chain. The immediate electron acceptor for the enzyme in this species is believed to be plastoquinone. Couples the redox reaction to proton translocation, and thus conserves the redox energy in a proton gradient. In Pelargonium hortorum (Common geranium), this protein is NAD(P)H-quinone oxidoreductase subunit H, chloroplastic.